The primary structure comprises 589 residues: MKIGAQVWRALAKSCLLCATLGCLHFPGSRGGKPDFFETKAVNGSLVKSRPVRSVAEAPAPIDCELSTWSSWTACDPCQKKRYRHTYLLRPSQFYGELCDLSDKEVEDCVTNQPCRSQVRCEGFVCAQTGRCVNRRLLCNGDNDCGDQSDEANCRRIYKNCQREMEQYWAIDRLASGINLFTNTFEGPVLDHRYYAGGCSPHYILDTNFRKPYNVESYTPQTKCEYEFTLTEYESYSDFERLVIEKKTHMFNFTSGFKVDGVMDLGIKVESNEGKNYVTRTKRFAHTQSKFLHARSVLEVAHYKLKSRSLMLHYEFLQRVKSLPLEYSYGEYRDLLRDFGTHFITEAVLGGIYEYTLIMNKDAMEQGDYTLSHVTACAGGSFGIGGMVYKVYVKVGVSAKKCSDIMKEINERNKRSTMVEDLVVLVRGGTSEDITALAYKELPTPELMEAWGDAVKYNPAIIKIKAEPLYELVTATDFAYSSTVKQNLKKALEEFQSEVSSCRCAPCRGNGVPVLKGSRCECICPGGFQGTACEVTYRKDIPIDGKWSCWSDWSACSGGHKTRHRQCNNPAPHKGGSPCSGPASETLNC.

A signal peptide spans 1 to 31 (MKIGAQVWRALAKSCLLCATLGCLHFPGSRG). The propeptide occupies 32–53 (GKPDFFETKAVNGSLVKSRPVR). Asn43 carries an N-linked (GlcNAc...) asparagine glycan. The TSP type-1 1 domain maps to 63–116 (DCELSTWSSWTACDPCQKKRYRHTYLLRPSQFYGELCDLSDKEVEDCVTNQPCR). Intrachain disulfides connect Cys64–Cys99, Cys75–Cys109, Cys78–Cys115, Cys121–Cys132, Cys126–Cys145, Cys139–Cys154, and Cys161–Cys199. 2 C-linked (Man) tryptophan glycosylation sites follow: Trp69 and Trp72. An LDL-receptor class A domain is found at 120–155 (RCEGFVCAQTGRCVNRRLLCNGDNDCGDQSDEANCR). Ca(2+) contacts are provided by Leu137, Asn140, Asp142, Asp144, Asp150, and Glu151. In terms of domain architecture, MACPF spans 157-503 (IYKNCQREME…EFQSEVSSCR (347 aa)). The next 8 membrane-spanning stretches (beta stranded) occupy residues 201–206 (PHYILD), 209–213 (FRKPY), 251–258 (FNFTSGFK), 261–268 (GVMDLGIK), 328–335 (SYGEYRDL), 338–343 (DFGTHF), 378–385 (AGGSFGIG), and 391–398 (VYVKVGVS). An intrachain disulfide couples Cys377 to Cys402. In terms of domain architecture, EGF-like spans 404-534 (DIMKEINERN…PGGFQGTACE (131 aa)). Position 417 is a phosphothreonine (Thr417). Disulfide bonds link Cys502-Cys549, Cys504-Cys520, Cys507-Cys522, and Cys524-Cys533. The 44-residue stretch at 544-587 (DGKWSCWSDWSACSGGHKTRHRQCNNPAPHKGGSPCSGPASETL) folds into the TSP type-1 2 domain. C-linked (Man) tryptophan glycosylation is found at Trp550 and Trp553. The cysteines at positions 556 and 589 are disulfide-linked. The disordered stretch occupies residues 570–589 (PAPHKGGSPCSGPASETLNC).

The protein belongs to the complement C6/C7/C8/C9 family. As to quaternary structure, heterotrimer of 3 chains: alpha (C8A), beta (C8B) and gamma (C8G); the alpha and gamma chains are disulfide bonded. Component of the membrane attack complex (MAC), composed of complement C5b, C6, C7, C8A, C8B, C8G and multiple copies of the pore-forming subunit C9. In terms of processing, N-glycosylated; contains one or two bound glycans. Not O-glycosylated.

Its subcellular location is the secreted. The protein resides in the target cell membrane. Its activity is regulated as follows. Membrane attack complex (MAC) assembly is inhibited by CD59, thereby protecting self-cells from damage during complement activation. CD59 acts by binding to the beta-haipins of C8 (C8A and C8B), forming an intermolecular beta-sheet that prevents incorporation of the multiple copies of C9 required for complete formation of the osmolytic pore. MAC assembly is also inhibited by clusterin (CLU) chaperones that inhibit polymerization of C9. Component of the membrane attack complex (MAC), a multiprotein complex activated by the complement cascade, which inserts into a target cell membrane and forms a pore, leading to target cell membrane rupture and cell lysis. The MAC is initiated by proteolytic cleavage of C5 into complement C5b in response to the classical, alternative, lectin and GZMK complement pathways. The complement pathways consist in a cascade of proteins that leads to phagocytosis and breakdown of pathogens and signaling that strengthens the adaptive immune system. C8B, together with C8A and C8G, inserts into the target membrane, but does not form pores by itself. During MAC assembly, associates with C5b, C6 and C7 to form the C5b8 intermediate complex that inserts into the target membrane and traverses the bilayer increasing membrane rigidity. In Mus musculus (Mouse), this protein is Complement component C8 beta chain (C8b).